A 300-amino-acid polypeptide reads, in one-letter code: Formamidopyrimidine-DNA glycosylase (300 aa).

The Schiff-base intermediate with DNA role is filled by Pro2. The active-site Proton donor is Glu3. Residue Lys60 is the Proton donor; for beta-elimination activity of the active site. 3 residues coordinate DNA: His108, Arg136, and Arg181. Residues 266–300 (WVYSRAGQPCRICNTPLEKIKLAGRSTHFCPQCQK) form an FPG-type zinc finger. Catalysis depends on Arg290, which acts as the Proton donor; for delta-elimination activity.

Belongs to the FPG family. Monomer. Zn(2+) is required as a cofactor.

It catalyses the reaction Hydrolysis of DNA containing ring-opened 7-methylguanine residues, releasing 2,6-diamino-4-hydroxy-5-(N-methyl)formamidopyrimidine.. It carries out the reaction 2'-deoxyribonucleotide-(2'-deoxyribose 5'-phosphate)-2'-deoxyribonucleotide-DNA = a 3'-end 2'-deoxyribonucleotide-(2,3-dehydro-2,3-deoxyribose 5'-phosphate)-DNA + a 5'-end 5'-phospho-2'-deoxyribonucleoside-DNA + H(+). Its function is as follows. Involved in base excision repair of DNA damaged by oxidation or by mutagenic agents. Acts as a DNA glycosylase that recognizes and removes damaged bases. Has a preference for oxidized purines, such as 7,8-dihydro-8-oxoguanine (8-oxoG). Has AP (apurinic/apyrimidinic) lyase activity and introduces nicks in the DNA strand. Cleaves the DNA backbone by beta-delta elimination to generate a single-strand break at the site of the removed base with both 3'- and 5'-phosphates. This Trichodesmium erythraeum (strain IMS101) protein is Formamidopyrimidine-DNA glycosylase.